The primary structure comprises 204 residues: Recombination protein RecR (204 aa).

The segment at 63-78 (CRICCNVADSELCPIC) adopts a C4-type zinc-finger fold. The region spanning 86–181 (NKICVVEQPQ…KVTRLARGLP (96 aa)) is the Toprim domain.

Belongs to the RecR family.

Functionally, may play a role in DNA repair. It seems to be involved in an RecBC-independent recombinational process of DNA repair. It may act with RecF and RecO. The polypeptide is Recombination protein RecR (Dehalococcoides mccartyi (strain ATCC BAA-2100 / JCM 16839 / KCTC 5957 / BAV1)).